The chain runs to 168 residues: Small ribosomal subunit protein uS5 (168 aa).

The 64-residue stretch at 11-74 folds into the S5 DRBM domain; it reads YSEKVVKIDR…EAAKKHLVKI (64 aa).

It belongs to the universal ribosomal protein uS5 family. In terms of assembly, part of the 30S ribosomal subunit. Contacts proteins S4 and S8.

Functionally, with S4 and S12 plays an important role in translational accuracy. Its function is as follows. Located at the back of the 30S subunit body where it stabilizes the conformation of the head with respect to the body. The protein is Small ribosomal subunit protein uS5 of Leptospira borgpetersenii serovar Hardjo-bovis (strain JB197).